The following is a 1285-amino-acid chain: MTPPQMVSQLDDARLDERQRAILDRQLHGLGGETKQRKNVFAYATVSDRIVLSVSSICAVLAGALNPLVPVIYGLLVSVYDGFAAGTVSASELRSKTATFSLYYVYLSIGLFAFTYVATVGFYYTGERMARALRTTYLAAILRQNMAFFDLLGPGEITSRIMSDMGTVQEAVTSKLAVMLTAIATFCAAFVVAFIMYWKTALIISPFFVIMIVTETLGGAYMVRHHKRAMELYSQAAGIAEEAIAAIKHVTAFGIQTLLSQRYLSVLEQAAKADRKAENMVAGMIAWMNAMPNLIYALAFWAGSIYLTRGQMSVAEVSATTLAVTIGSFAIIRIAPSAQALLSGIAITGEILKSIARRSPQDPLVKEGDEPSTVVGDIVLDRVGLIYPSRDDVDILQDVSLRCAAMKKTAIVGSSGSGKSSILGLVERFYEPTSGTVLLDGRDIQSLNLRWLRRQIALVDQMPVLFNATILENILYGCSDMVSQWSESEQLDRVVQASKKANAHDFISALPDGYHTHVGEKGLQLSGGQRQRVAIARALIRDPKILLLDEATSALDSKSEAMVQEALDAAAEHRTTIIVAHRLSTIQNADHIIVLDHGKVVEEGTHHALVAQNGAYAALVQKQQIGDTHDHKAPDGARLSIEDDDDEDSRYGGNTEYVDEKDIRTEEVALSSAAHDEGTQRDSLKLSALQTIAFIARLSKRDWKVLLFGLANAILAGLTIPVQSVFFAKILTVIGFPPPQYPQLRSEVDFWSGLYVMLTGTTFLFWMGVEIALSYATQKLARRVREVCFRSILVQDMAFFDVPGNSPSALSSVLSKSTNDLAGLGGPVMGGILTFLSTILAGIVLALAIGWKLALVCTATIPIVVACGWLRLQVLSTFDSKVRQSGIESAAYAGELVRTVRTVASLGLEEHALARYEGILAKQAAKSLRSILLASALYAASASVVYLCAALAFWYGGTLIASHEYSTFQVYICFVSLISGSQIAGSIFTYAPDASKAMHASREIQDIMNLKPSINKVAPTGPPPAHEGTEKNQPQQNLSACRVEFEHVSFTYPSRPTRRALDNLHITVEPGQTLALVGQSGSGKSTCVSLLERFYDPDQGRILIDGQDIKLRDVDEYRRDISLVSQETIIFSGTIRDNITVGLAGQEVSDDEILEACKQANILEFVQSLPDGLSTLVGTGGSMLSGGQKQRIAIARAFLRKPKILLLDEATSALDSQSEAIVQEAMDAIRKDRTTIMVAHRLSTVQNADVICVLQDGKLLEIGTHEQLLGKRGKYWEMVSMQSLH.

One can recognise an ABC transmembrane type-1 1 domain in the interval 54–343 (VSSICAVLAG…IAPSAQALLS (290 aa)). 6 helical membrane passes run 57-77 (ICAV…GLLV), 102-122 (LYYV…TVGF), 176-196 (LAVM…AFIM), 203-223 (IISP…AYMV), 281-301 (VAGM…LAFW), and 312-332 (MSVA…FAII). Residues 380-622 (LDRVGLIYPS…NGAYAALVQK (243 aa)) enclose the ABC transporter 1 domain. 413 to 420 (GSSGSGKS) contributes to the ATP binding site. N-linked (GlcNAc...) asparagine glycosylation occurs at Asn467. The interval 627–654 (DTHDHKAPDGARLSIEDDDDEDSRYGGN) is disordered. Helical transmembrane passes span 707-727 (LFGL…SVFF), 753-773 (GLYV…EIAL), 831-851 (GILT…AIGW), 855-875 (LVCT…LQVL), 931-951 (ILLA…CAAL), and 968-988 (FQVY…GSIF). The 284-residue stretch at 713-996 (AILAGLTIPV…IFTYAPDASK (284 aa)) folds into the ABC transmembrane type-1 2 domain. Residue Asn1037 is glycosylated (N-linked (GlcNAc...) asparagine). The ABC transporter 2 domain occupies 1043-1281 (VEFEHVSFTY…RGKYWEMVSM (239 aa)). 1078–1085 (GQSGSGKS) contacts ATP. N-linked (GlcNAc...) asparagine glycosylation occurs at Asn1138.

The protein belongs to the ABC transporter superfamily. ABCB family. Multidrug resistance exporter (TC 3.A.1.201) subfamily.

Its subcellular location is the membrane. Its pathway is secondary metabolite biosynthesis. Its function is as follows. ABC-type transporter; part of the gene cluster that mediates the biosynthesis of the isoquinoline alkaloids fumisoquin A, fumisoquin B and fumisoquin C; as well as small amounts of fumipyrrole as a shunt metabolite. The products of the cluster lead to a brown coloration and are important for growth and conidiation. FsqE possibly plays a role of self-protection. This is ABC-type transporter fsqE from Aspergillus fumigatus (strain ATCC MYA-4609 / CBS 101355 / FGSC A1100 / Af293) (Neosartorya fumigata).